A 728-amino-acid polypeptide reads, in one-letter code: 1,4-alpha-glucan branching enzyme GlgB (728 aa).

Asp-405 serves as the catalytic Nucleophile. Glu-458 (proton donor) is an active-site residue.

It belongs to the glycosyl hydrolase 13 family. GlgB subfamily. Monomer.

It catalyses the reaction Transfers a segment of a (1-&gt;4)-alpha-D-glucan chain to a primary hydroxy group in a similar glucan chain.. The protein operates within glycan biosynthesis; glycogen biosynthesis. Catalyzes the formation of the alpha-1,6-glucosidic linkages in glycogen by scission of a 1,4-alpha-linked oligosaccharide from growing alpha-1,4-glucan chains and the subsequent attachment of the oligosaccharide to the alpha-1,6 position. In Escherichia coli O157:H7, this protein is 1,4-alpha-glucan branching enzyme GlgB.